A 416-amino-acid chain; its full sequence is MSQIAILSVNHQLAPVEVREKVAFTPDKLTQALSDLHGIYGIYACIILSTCNRVEIYVNSDNENPKEVLSNYLAKIHNITRDRINPYLNYFEDNEALTHVCNVATGLDSLVLGEPQILGQLKNAYHMAKEAKTLNKLLEKLFQHAFSTAKKVRTDTQIGVSPVSIAYCSVKLSEKIFECLSEQTVLLIGAGEMIELCAQYLNKKKVSNMIIANRTIENAQKIANLYQAQSIGLKQFSSVIHKADIIISSTAASVPIIGKGLIESALKKRKHKPIFMLDIAIPRDIEPEVGQLDDIYLYTIDDLEQVINDNIGNREKEKNLAQEIIIKQNQVFNQWLKVLPNEQLVRSYRSNANLIKNKLLEKAIKQIKHSGDYENIIRKFADQLTNKLLHLPSKNIKQTSTDNLSQCEGCIPNIKK.

Residues 50–53 (TCNR), S109, 114–116 (EPQ), and Q120 each bind substrate. Residue C51 is the Nucleophile of the active site. 189–194 (GAGEMI) provides a ligand contact to NADP(+).

It belongs to the glutamyl-tRNA reductase family. As to quaternary structure, homodimer.

It catalyses the reaction (S)-4-amino-5-oxopentanoate + tRNA(Glu) + NADP(+) = L-glutamyl-tRNA(Glu) + NADPH + H(+). It participates in porphyrin-containing compound metabolism; protoporphyrin-IX biosynthesis; 5-aminolevulinate from L-glutamyl-tRNA(Glu): step 1/2. Its function is as follows. Catalyzes the NADPH-dependent reduction of glutamyl-tRNA(Glu) to glutamate 1-semialdehyde (GSA). The sequence is that of Glutamyl-tRNA reductase from Vesicomyosocius okutanii subsp. Calyptogena okutanii (strain HA).